The chain runs to 1011 residues: DNA-directed RNA polymerase 2, chloroplastic/mitochondrial (1011 aa).

The segment at 307–326 (KGDDNEESGGVENETSMKEQ) is disordered. Catalysis depends on residues Asp712, Lys787, and Asp944.

It belongs to the phage and mitochondrial RNA polymerase family. Interacts with NIP1 and NIP2.

Its subcellular location is the plastid. It localises to the chloroplast. The protein resides in the mitochondrion. It carries out the reaction RNA(n) + a ribonucleoside 5'-triphosphate = RNA(n+1) + diphosphate. In terms of biological role, DNA-dependent RNA polymerase catalyzes the transcription of DNA into RNA using the four ribonucleoside triphosphates as substrates. This Arabidopsis thaliana (Mouse-ear cress) protein is DNA-directed RNA polymerase 2, chloroplastic/mitochondrial (RPOT2).